The chain runs to 512 residues: Glutathione-binding protein GsiB (512 aa).

The first 26 residues, 1-26, serve as a signal peptide directing secretion; the sequence is MARAVHRSGLVALGIATALMASCAFA.

Belongs to the bacterial solute-binding protein 5 family. The complex is composed of two ATP-binding proteins (GsiA), two transmembrane proteins (GsiC and GsiD) and a solute-binding protein (GsiB).

The protein resides in the periplasm. Its function is as follows. Part of the ABC transporter complex GsiABCD involved in glutathione import. Binds glutathione. This Shigella flexneri protein is Glutathione-binding protein GsiB.